The following is a 262-amino-acid chain: Integral membrane protein 2B (262 aa).

The Cytoplasmic segment spans residues 1 to 49; sequence MVKVSFNSALAHKEAANKEEENSQVLILPPDAKEPEDVVVPAGHKRAWC. Residues 50 to 70 traverse the membrane as a helical; Signal-anchor for type II membrane protein segment; the sequence is WCMCFGLAFMLAGVILGGAYL. Over 71–262 the chain is Lumenal; that stretch reads YKYFAFQQGG…FAMETLICEQ (192 aa). The BRICHOS domain occupies 132–226; sequence FADSDPADIV…LCRGKETYKL (95 aa). Disulfide bonds link C159–C218 and C243–C260. N165 carries N-linked (GlcNAc...) asparagine glycosylation.

Belongs to the ITM2 family. As to quaternary structure, homodimer; disulfide-linked. As to expression, expressed in areas of chondro-osteogenic transition and widely in the nervous system.

The protein localises to the golgi apparatus membrane. The protein resides in the cell membrane. It is found in the endosome membrane. Its function is as follows. Plays a role in the induction of neurite outgrowth. The protein is Integral membrane protein 2B (ITM2B) of Gallus gallus (Chicken).